The following is a 244-amino-acid chain: tRNA pseudouridine synthase A (244 aa).

Aspartate 52 acts as the Nucleophile in catalysis. Tyrosine 110 is a binding site for substrate.

It belongs to the tRNA pseudouridine synthase TruA family. In terms of assembly, homodimer.

The catalysed reaction is uridine(38/39/40) in tRNA = pseudouridine(38/39/40) in tRNA. In terms of biological role, formation of pseudouridine at positions 38, 39 and 40 in the anticodon stem and loop of transfer RNAs. The sequence is that of tRNA pseudouridine synthase A from Acetivibrio thermocellus (strain ATCC 27405 / DSM 1237 / JCM 9322 / NBRC 103400 / NCIMB 10682 / NRRL B-4536 / VPI 7372) (Clostridium thermocellum).